Reading from the N-terminus, the 412-residue chain is MAENLKGCSVCCKSSWNQLQDLCRLAKLSCPALGISKRNLYDFEVEYLCDYKKIREQEYYLVKWRGYPDSESTWEPRQNLKCVRILKQFHKDLERELLRRHHRSKTPRHLDPSLANYLVQKAKQRRALRRWEQELNAKRSHLGRITVENEVDLDGPPRAFVYINEYRVGEGITLNQVAVGCECQDCLWAPTGGCCPGASLHKFAYNDQGQVRLRAGLPIYECNSRCRCGYDCPNRVVQKGIRYDLCIFRTDDGRGWGVRTLEKIRKNSFVMEYVGEIITSEEAERRGQIYDRQGATYLFDLDYVEDVYTVDAAYYGNISHFVNHSCDPNLQVYNVFIDNLDERLPRIAFFATRTIRAGEELTFDYNMQVDPVDMESTRMDSNFGLAGLPGSPKKRVRIECKCGTESCRKYLF.

Positions M1–F89 are interaction with SIRT1. The Chromo domain occupies F43–H101. Residues V179–G240 enclose the Pre-SET domain. Zn(2+)-binding residues include C181, C183, C186, C194, C195, C222, C226, C228, and C232. Residues Y243–N366 enclose the SET domain. R254–W256 serves as a coordination point for S-adenosyl-L-methionine. Residues G255–T377 form a mediates interaction with MECOM region. K266 carries the post-translational modification N6-acetyllysine. Residues Y297 and N323–H324 contribute to the S-adenosyl-L-methionine site. C326 lines the Zn(2+) pocket. S391 carries the post-translational modification Phosphoserine. The 17-residue stretch at V396–F412 folds into the Post-SET domain. Zn(2+) contacts are provided by C400, C402, and C407.

It belongs to the class V-like SAM-binding methyltransferase superfamily. Histone-lysine methyltransferase family. Suvar3-9 subfamily. Interacts with H3 and H4 histones. Interacts with GFI1B, DNMT3B, CBX1, CBX4, CCAR2, MBD1, RUNX1, RUNX3, MYOD1, SMAD5 and RB1. Interacts with SBF1 through the SET domain. Interacts with HDAC1 and HDAC2 through the N-terminus and associates with the core histone deacetylase complex composed of HDAC1, HDAC2, RBBP4 and RBBP7. Component of the eNoSC complex, composed of SIRT1, SUV39H1 and RRP8. Interacts (via SET domain) with MECOM; enhances MECOM transcriptional repression activity. Interacts with LMNA; the interaction increases stability of SUV39H1. The large PER complex involved in the histone methylation is composed of at least PER2, CBX3, TRIM28, SUV39H1 and/or SUV39H2; CBX3 mediates the formation of the complex. In terms of assembly, (Microbial infection) Interacts with HTLV-1 Tax protein, leading to abrogate Tax transactivation of HTLV-1 LTR. In terms of processing, phosphorylated on serine residues, and to a lesser degree, on threonine residues. The phosphorylated form is stabilized by SBF1 and is less active in its transcriptional repressor function. Ubiquitinated by the DCX(DCAF13) E3 ubiquitin ligase complex, leading to its degradation. Post-translationally, acetylated at Lys-266, leading to inhibition of enzyme activity. SIRT1-mediated deacetylation relieves this inhibition. In terms of processing, (Microbial infection) A higher molecular weight form is also seen in M.bovis infected cells.

The protein localises to the nucleus. It is found in the nucleus lamina. Its subcellular location is the nucleoplasm. It localises to the chromosome. The protein resides in the centromere. The protein localises to the cytoplasmic vesicle. It is found in the phagosome lumen. Its subcellular location is the cell membrane. It carries out the reaction L-lysyl(9)-[histone H3] + 3 S-adenosyl-L-methionine = N(6),N(6),N(6)-trimethyl-L-lysyl(9)-[histone H3] + 3 S-adenosyl-L-homocysteine + 3 H(+). Inhibited by S-adenosyl-L-homocysteine. Negatively regulated by CCAR2. In terms of biological role, histone methyltransferase that specifically trimethylates 'Lys-9' of histone H3 using monomethylated H3 'Lys-9' as substrate. Also weakly methylates histone H1 (in vitro). H3 'Lys-9' trimethylation represents a specific tag for epigenetic transcriptional repression by recruiting HP1 (CBX1, CBX3 and/or CBX5) proteins to methylated histones. Mainly functions in heterochromatin regions, thereby playing a central role in the establishment of constitutive heterochromatin at pericentric and telomere regions. H3 'Lys-9' trimethylation is also required to direct DNA methylation at pericentric repeats. SUV39H1 is targeted to histone H3 via its interaction with RB1 and is involved in many processes, such as repression of MYOD1-stimulated differentiation, regulation of the control switch for exiting the cell cycle and entering differentiation, repression by the PML-RARA fusion protein, BMP-induced repression, repression of switch recombination to IgA and regulation of telomere length. Component of the eNoSC (energy-dependent nucleolar silencing) complex, a complex that mediates silencing of rDNA in response to intracellular energy status and acts by recruiting histone-modifying enzymes. The eNoSC complex is able to sense the energy status of cell: upon glucose starvation, elevation of NAD(+)/NADP(+) ratio activates SIRT1, leading to histone H3 deacetylation followed by dimethylation of H3 at 'Lys-9' (H3K9me2) by SUV39H1 and the formation of silent chromatin in the rDNA locus. Recruited by the large PER complex to the E-box elements of the circadian target genes such as PER2 itself or PER1, contributes to the conversion of local chromatin to a heterochromatin-like repressive state through H3 'Lys-9' trimethylation. (Microbial infection) Plays a role in defense against mycobacterial infections. Methylates M.tuberculosis HupB on 'Lys-140', probably methylates HupB of M.bovis also. Methylation has an inhibitory effect on mycobacterial growth in the host. Macrophages expressing about 60% SUV39H1 are slightly more susceptible to M.bovis or M.tuberculosis infection. Chaetocin (an inhibitor of this enzyme) increases macrophage survival of M.tuberculosis. This protein inhibits biofilm formation by M.tuberculosis via 'Lys-140' trimethylation. The polypeptide is Histone-lysine N-methyltransferase SUV39H1 (SUV39H1) (Homo sapiens (Human)).